The primary structure comprises 490 residues: MKPCQLKQKQKTLAIAKVNNKGKVIQIIGPVLDIVFPDGQLPKVFNAIKINNSNNNWITCEVQQLLGDNKVRAVAMSTTEGLKRGASAIDTGEPISIPVGKETLGRIFNVLGEPIDEKGPVISNDKLPIHRPAPKFTQLETKPSIFETGIKVVDLLAPYRRGGKIGLFGGAGVGKTVLIMELINNVAKAHGGVSVFGGVGERTREGNDLYQEMKESGVINEKDLNLSKVALCYGQMNEPPGARMRVGLTALTMAEYFRDVNKQNVLLFIDNIFRFVQAGSEVSALLGRMPSAVGYQPTLGTEMGALQERITSTLDGSITSIQAVYVPADDLTDPAPATTFAHLDATTVLSRALAAKGIYPAVDPLDSTSTMLQPGIVSDEHYTTARKVKETLQRYKELQDIIAILGLDELSEEDRLIVSRARKIEKFLSQPFFVAEVFTGISGKYVSLSDSIKGFNMILSGEVDNIPEQAFYLVGRIEEAIDKAKQVEKS.

169-176 (GGAGVGKT) provides a ligand contact to ATP.

This sequence belongs to the ATPase alpha/beta chains family. In terms of assembly, F-type ATPases have 2 components, CF(1) - the catalytic core - and CF(0) - the membrane proton channel. CF(1) has five subunits: alpha(3), beta(3), gamma(1), delta(1), epsilon(1). CF(0) has four main subunits: a(1), b(1), b'(1) and c(9-12).

It is found in the plastid. Its subcellular location is the chloroplast thylakoid membrane. It catalyses the reaction ATP + H2O + 4 H(+)(in) = ADP + phosphate + 5 H(+)(out). Its function is as follows. Produces ATP from ADP in the presence of a proton gradient across the membrane. The catalytic sites are hosted primarily by the beta subunits. In Cyanidium caldarium (Red alga), this protein is ATP synthase subunit beta, chloroplastic.